The following is a 180-amino-acid chain: uncharacterized protein (180 aa).

The span at 114-136 shows a compositional bias: basic and acidic residues; that stretch reads DKISESDSLPDEYKEYVVKHDSD. Residues 114–180 form a disordered region; the sequence is DKISESDSLP…NFDNPDDNPK (67 aa). The span at 137 to 146 shows a compositional bias: acidic residues; the sequence is NSDNDSDNSD. Positions 147–173 are enriched in low complexity; that stretch reads NDSNNSDNDSNNSDSDSDNSNDPNNFD.

This is an uncharacterized protein from Acanthamoeba polyphaga (Amoeba).